A 93-amino-acid polypeptide reads, in one-letter code: Small ribosomal subunit protein uS19c (93 aa).

Belongs to the universal ribosomal protein uS19 family.

It is found in the plastid. The protein resides in the chloroplast. In terms of biological role, protein S19 forms a complex with S13 that binds strongly to the 16S ribosomal RNA. In Stigeoclonium helveticum (Green alga), this protein is Small ribosomal subunit protein uS19c.